A 281-amino-acid chain; its full sequence is NADPH-dependent 7-cyano-7-deazaguanine reductase (281 aa).

81–83 (IES) is a substrate binding site. 83-84 (SK) provides a ligand contact to NADPH. The active-site Thioimide intermediate is Cys-188. The active-site Proton donor is the Asp-195. A substrate-binding site is contributed by 227–228 (HE). Position 256–257 (256–257 (RG)) interacts with NADPH.

Belongs to the GTP cyclohydrolase I family. QueF type 2 subfamily. Homodimer.

The protein localises to the cytoplasm. The catalysed reaction is 7-aminomethyl-7-carbaguanine + 2 NADP(+) = 7-cyano-7-deazaguanine + 2 NADPH + 3 H(+). It participates in tRNA modification; tRNA-queuosine biosynthesis. Functionally, catalyzes the NADPH-dependent reduction of 7-cyano-7-deazaguanine (preQ0) to 7-aminomethyl-7-deazaguanine (preQ1). The protein is NADPH-dependent 7-cyano-7-deazaguanine reductase of Polaromonas naphthalenivorans (strain CJ2).